A 200-amino-acid chain; its full sequence is Pyridoxal 5'-phosphate synthase subunit PdxT (200 aa).

Residue 52-54 (GES) participates in L-glutamine binding. The active-site Nucleophile is the cysteine 84. L-glutamine contacts are provided by residues arginine 115 and 143–144 (IR). Residues histidine 179 and glutamate 181 each act as charge relay system in the active site.

It belongs to the glutaminase PdxT/SNO family. As to quaternary structure, in the presence of PdxS, forms a dodecamer of heterodimers. Only shows activity in the heterodimer.

The enzyme catalyses aldehydo-D-ribose 5-phosphate + D-glyceraldehyde 3-phosphate + L-glutamine = pyridoxal 5'-phosphate + L-glutamate + phosphate + 3 H2O + H(+). It catalyses the reaction L-glutamine + H2O = L-glutamate + NH4(+). It participates in cofactor biosynthesis; pyridoxal 5'-phosphate biosynthesis. Functionally, catalyzes the hydrolysis of glutamine to glutamate and ammonia as part of the biosynthesis of pyridoxal 5'-phosphate. The resulting ammonia molecule is channeled to the active site of PdxS. This Methanosarcina barkeri (strain Fusaro / DSM 804) protein is Pyridoxal 5'-phosphate synthase subunit PdxT.